The chain runs to 392 residues: Xylose operon regulatory protein (392 aa).

The HTH araC/xylS-type domain occupies 288–386 (IQAMHYIRNH…DTTPKEYRDV (99 aa)). DNA-binding regions (H-T-H motif) lie at residues 305 to 326 (DQVLDAVGISRSNLEKRFKEEV) and 353 to 376 (INEISQMCGYPSLQYFYSVFKKAY).

Its function is as follows. Regulatory protein for the xylBAFGHR operon. This Escherichia coli O157:H7 protein is Xylose operon regulatory protein (xylR).